Reading from the N-terminus, the 123-residue chain is Cliotide T4 (123 aa).

An N-terminal signal peptide occupies residues 1–28; it reads MASLRIAPLALFFFLAASVMFTVEKTEA. The cyclopeptide (Gly-Asn) cross-link spans 29–58; that stretch reads GIPCGESCVFIPCITAAIGCSCKSKVCYRN. 3 disulfide bridges follow: cysteine 32-cysteine 48, cysteine 36-cysteine 50, and cysteine 41-cysteine 55. Positions 59 to 123 are cleaved as a propeptide — removed in mature form; it reads HVIAAEAKTM…KDHLKMSITN (65 aa).

Contains 3 disulfide bonds. Post-translationally, this is a cyclic peptide. As to expression, expressed in flower, stem, shoot, root, leaf, seed, pod and nodule (at protein level).

In terms of biological role, probably participates in a plant defense mechanism. Active against Gram-negative bacteria E.coli ATCC 700926 (MIC=1.0 uM), K.pneumoniae ATTC 13883 (MIC=5.5 uM) and P.aeruginosa ATCC 39018 (MIC=7.5 uM). Has hemolytic and cytotoxic activity. This chain is Cliotide T4, found in Clitoria ternatea (Butterfly pea).